Here is an 836-residue protein sequence, read N- to C-terminus: MGIQGLLPQLKSIMAPIGVEALKGQTVAVDTYSWLHKGALSCGDRLCKGLPTTRHIEYCMHRVNMLRHHGVKPILVFDGGHLPMKGDQETKRERSRKENLERAKEHESAGNSRAAFECYQKAVDITPRIAFELIQVLKQEKVDYIVAPYEADAQMTFLSVNKLVDAVITEDSDLIPFGCSRIIFKMDKFGQGVEFHITRLQRCRELDLNGFTMQMLLEMCILSGCDYLPSLPGMGVKRAHALIQKLKGHEKVIKHLRYSAVSVPPQYEENFRKAIWAFQFQRVYDPVTEDIVHLSGIPHGSSEDLDFLGPWLPQTVAKGIAQGNIDPITKEPFEGKTESSALAFDKVHLNRESSAPSNGKKKLDLPVQRNVLTNYFCLASLEAKRKFRAPKVTPKQQVLNGSLPSPRIEDSGTPDLIEDTSLPSNNIQVYQCSSEHFSSGTPLDDSINTASQCSSERVRCDIPRDDSASVSPQCSHDIGSDPAEDPDIEGNKVKVNFCNRSTIPTGSFLEGTLPGISDPFLDSHNTEPSRAAPRYAEKSNVVSANRNITVRSSYFKTVNKRVCTNQGEDECHDEDNCETGNYTLPGDQQRSSGGILKRRKFSDPQNFEDGMFQPTSPHESPPVADKGCDSDSHDGINTNSEGKFGCNVAHVNKYSGIAEKSMDKFAALISSFRYAGSRASGLRAPLKDVKNTLPVRSVLRPPEQRFGCTAKKTTRVPLQSRFSSDATNSTDVPDLSTFAYRPTTASAHSDQGKITSKATDAAAGPPDLRTFAYAPTRSTTSRFDQSENTRKAMCTADSPPDISTFEYKPMKSAVRRSDGSKFSGAALKAARRTSRS.

Residues 1–99 form an N-domain region; that stretch reads MGIQGLLPQL…TKRERSRKEN (99 aa). The Mg(2+) site is built by aspartate 30 and aspartate 78. Residues 82–108 form a disordered region; the sequence is LPMKGDQETKRERSRKENLERAKEHES. Residues 84–108 are compositionally biased toward basic and acidic residues; sequence MKGDQETKRERSRKENLERAKEHES. The tract at residues 138-230 is I-domain; it reads KQEKVDYIVA…ILSGCDYLPS (93 aa). 5 residues coordinate Mg(2+): glutamate 150, aspartate 152, aspartate 171, aspartate 173, and aspartate 226. Disordered stretches follow at residues 464–488, 568–641, and 744–836; these read RDDSASVSPQCSHDIGSDPAEDPDI, EDEC…TNSE, and TASA…TSRS. A compositionally biased stretch (acidic residues) spans 568–577; that stretch reads EDECHDEDNC. 2 stretches are compositionally biased toward polar residues: residues 578 to 592 and 744 to 758; these read ETGNYTLPGDQQRSS and TASAHSDQGKITSKA.

The protein belongs to the XPG/RAD2 endonuclease family. EXO1 subfamily. The cofactor is Mg(2+).

The protein resides in the nucleus. In terms of biological role, putative 5'-&gt;3' double-stranded DNA exonuclease which may also contain a cryptic 3'-&gt;5' double-stranded DNA exonuclease activity. May be involved in DNA mismatch repair (MMR). This is Exonuclease 1 (EXO1) from Oryza sativa subsp. japonica (Rice).